The following is a 189-amino-acid chain: Putative lipoprotein LppK (189 aa).

Positions 1 to 22 (MRRNIRVTLGAATIVAALGLSG) are cleaved as a signal peptide. A lipid anchor (N-palmitoyl cysteine) is attached at Cys23. The S-diacylglycerol cysteine moiety is linked to residue Cys23. 2 disordered regions span residues 26–49 (PEFK…LEAA) and 166–189 (MGNS…TPPG). Over residues 169–179 (SPDSTPSATSP) the composition is skewed to low complexity. The segment covering 180–189 (APAPSPTPPG) has biased composition (pro residues).

This sequence belongs to the MTB12 family.

The protein resides in the cell membrane. The chain is Putative lipoprotein LppK (lppK) from Mycobacterium tuberculosis (strain CDC 1551 / Oshkosh).